Consider the following 67-residue polypeptide: Spiniferin (67 aa).

The first 23 residues, 1–23 (MKTQLAILLITLVLFQMFSQSDA), serve as a signal peptide directing secretion. At Leu-36 the chain carries Leucine amide. Positions 40 to 67 (GLNDLSDLDELFDGEISKADLDFLREIM) are excised as a propeptide.

The protein belongs to the non-disulfide-bridged peptide (NDBP) superfamily. Short antimicrobial peptide (group 4) family. In terms of tissue distribution, expressed by the venom gland.

It localises to the secreted. Its subcellular location is the target cell membrane. In terms of biological role, alpha-helical and amphipathic peptide with weak antimicrobial activities against both Gram-positive (MIC=41 uM to &gt;82 uM) and Gram-negative (MIC&gt;82 uM) bacteria. It has extremely weak hemolytic activity against human erythrocytes. This Heterometrus spinifer (Asia giant forest scorpion) protein is Spiniferin.